The chain runs to 245 residues: Ribosomal RNA small subunit methyltransferase G (245 aa).

S-adenosyl-L-methionine is bound by residues glycine 85, phenylalanine 90, 108-110 (DST), 136-137 (AE), and arginine 155.

Belongs to the methyltransferase superfamily. RNA methyltransferase RsmG family.

The protein resides in the cytoplasm. In terms of biological role, specifically methylates the N7 position of a guanine in 16S rRNA. This Trichormus variabilis (strain ATCC 29413 / PCC 7937) (Anabaena variabilis) protein is Ribosomal RNA small subunit methyltransferase G.